The following is a 288-amino-acid chain: Pyridoxal kinase PdxY (288 aa).

Substrate is bound by residues Ser-12 and 47–48 (TQ). Residues Asp-114, Glu-151, Lys-184, and 211-214 (RPLL) each bind ATP. Residue Asp-225 coordinates substrate.

The protein belongs to the pyridoxine kinase family. PdxY subfamily. As to quaternary structure, homodimer. Requires Mg(2+) as cofactor.

The enzyme catalyses pyridoxal + ATP = pyridoxal 5'-phosphate + ADP + H(+). Its pathway is cofactor metabolism; pyridoxal 5'-phosphate salvage; pyridoxal 5'-phosphate from pyridoxal: step 1/1. Its function is as follows. Pyridoxal kinase involved in the salvage pathway of pyridoxal 5'-phosphate (PLP). Catalyzes the phosphorylation of pyridoxal to PLP. This Pseudomonas syringae pv. syringae (strain B728a) protein is Pyridoxal kinase PdxY.